The following is a 127-amino-acid chain: Aspartate 1-decarboxylase (127 aa).

Serine 25 functions as the Schiff-base intermediate with substrate; via pyruvic acid in the catalytic mechanism. Residue serine 25 is modified to Pyruvic acid (Ser). Threonine 57 contacts substrate. The active-site Proton donor is the tyrosine 58. 73–75 contacts substrate; the sequence is GAA.

The protein belongs to the PanD family. Heterooctamer of four alpha and four beta subunits. The cofactor is pyruvate. Post-translationally, is synthesized initially as an inactive proenzyme, which is activated by self-cleavage at a specific serine bond to produce a beta-subunit with a hydroxyl group at its C-terminus and an alpha-subunit with a pyruvoyl group at its N-terminus.

The protein resides in the cytoplasm. It carries out the reaction L-aspartate + H(+) = beta-alanine + CO2. The protein operates within cofactor biosynthesis; (R)-pantothenate biosynthesis; beta-alanine from L-aspartate: step 1/1. In terms of biological role, catalyzes the pyruvoyl-dependent decarboxylation of aspartate to produce beta-alanine. This chain is Aspartate 1-decarboxylase, found in Listeria welshimeri serovar 6b (strain ATCC 35897 / DSM 20650 / CCUG 15529 / CIP 8149 / NCTC 11857 / SLCC 5334 / V8).